The sequence spans 512 residues: 2,3-bisphosphoglycerate-independent phosphoglycerate mutase (512 aa).

2 residues coordinate Mn(2+): Asp11 and Ser61. The active-site Phosphoserine intermediate is the Ser61. Residues His122, 152 to 153 (RD), Arg184, Arg190, 259 to 262 (RADR), and Lys332 contribute to the substrate site. Residues Asp399, His403, Asp440, His441, and His459 each coordinate Mn(2+).

The protein belongs to the BPG-independent phosphoglycerate mutase family. As to quaternary structure, monomer. Requires Mn(2+) as cofactor.

It catalyses the reaction (2R)-2-phosphoglycerate = (2R)-3-phosphoglycerate. The protein operates within carbohydrate degradation; glycolysis; pyruvate from D-glyceraldehyde 3-phosphate: step 3/5. Catalyzes the interconversion of 2-phosphoglycerate and 3-phosphoglycerate. The sequence is that of 2,3-bisphosphoglycerate-independent phosphoglycerate mutase from Francisella tularensis subsp. novicida (strain U112).